The following is a 944-amino-acid chain: Lactoferrin-binding protein A (944 aa).

The first 27 residues, M1 to P27, serve as a signal peptide directing secretion. One can recognise a TBDR plug domain in the interval R52–K178. In terms of domain architecture, TBDR beta-barrel spans S189–F944. The TonB C-terminal box motif lies at G927–F944.

Belongs to the TonB-dependent receptor family.

The protein resides in the cell outer membrane. Its function is as follows. Unknown. May be an iron-siderophore receptor. The protein is Lactoferrin-binding protein A (lbpA) of Neisseria meningitidis serogroup A / serotype 4A (strain DSM 15465 / Z2491).